Here is a 622-residue protein sequence, read N- to C-terminus: Chaperone protein HscA homolog (622 aa).

The protein belongs to the heat shock protein 70 family.

Chaperone involved in the maturation of iron-sulfur cluster-containing proteins. Has a low intrinsic ATPase activity which is markedly stimulated by HscB. The sequence is that of Chaperone protein HscA homolog from Burkholderia pseudomallei (strain 668).